The following is a 276-amino-acid chain: MKLCGFEVGLDQPLFLIAGPCVIESMQLQLDTAGKLKEVTDRLGVNFIFKSSFDKANRTSGTAFRGPGMEEGLKVLAEVKKQIGVPVLTDVHEYTPMDEVASVVDVLQTPAFLVRQTDFIRKVCSAGKPVNIKKGQFLAPWDMKPVVEKAKATGNEQIMVCERGASFGYNNLVSDMRSLAVMRDTGCPVVFDATHSVQLPGGQGTSSGGQREHVPVLARAAVAVGISGLFAETHPDPSKALSDGPNAWPLDQMEALLETLMELDAVTKKHGFSRFA.

The protein belongs to the KdsA family.

The protein localises to the cytoplasm. It catalyses the reaction D-arabinose 5-phosphate + phosphoenolpyruvate + H2O = 3-deoxy-alpha-D-manno-2-octulosonate-8-phosphate + phosphate. It functions in the pathway carbohydrate biosynthesis; 3-deoxy-D-manno-octulosonate biosynthesis; 3-deoxy-D-manno-octulosonate from D-ribulose 5-phosphate: step 2/3. Its pathway is bacterial outer membrane biogenesis; lipopolysaccharide biosynthesis. The chain is 2-dehydro-3-deoxyphosphooctonate aldolase from Stenotrophomonas maltophilia (strain R551-3).